The following is a 450-amino-acid chain: Bifunctional protein GlmU (450 aa).

A pyrophosphorylase region spans residues 1 to 226 (MLAVAVLAAG…PDEVNGINNR (226 aa)). UDP-N-acetyl-alpha-D-glucosamine contacts are provided by residues 7-10 (LAAG), Lys21, Gln73, and 78-79 (GT). Position 103 (Asp103) interacts with Mg(2+). Residues Gly140, Glu155, Asn170, and Asn224 each contribute to the UDP-N-acetyl-alpha-D-glucosamine site. Asn224 serves as a coordination point for Mg(2+). A linker region spans residues 227–247 (QQLAQCETMLQERLRHHWMAE). The segment at 248-450 (GVTFVDPASC…IKENWAGPQG (203 aa)) is N-acetyltransferase. Residues Arg329 and Lys347 each contribute to the UDP-N-acetyl-alpha-D-glucosamine site. Catalysis depends on His359, which acts as the Proton acceptor. The UDP-N-acetyl-alpha-D-glucosamine site is built by Tyr362 and Asn373. Residues Ala376, 382–383 (NY), Ala419, and Arg436 contribute to the acetyl-CoA site.

This sequence in the N-terminal section; belongs to the N-acetylglucosamine-1-phosphate uridyltransferase family. In the C-terminal section; belongs to the transferase hexapeptide repeat family. As to quaternary structure, homotrimer. Requires Mg(2+) as cofactor.

The protein localises to the cytoplasm. It carries out the reaction alpha-D-glucosamine 1-phosphate + acetyl-CoA = N-acetyl-alpha-D-glucosamine 1-phosphate + CoA + H(+). The enzyme catalyses N-acetyl-alpha-D-glucosamine 1-phosphate + UTP + H(+) = UDP-N-acetyl-alpha-D-glucosamine + diphosphate. It functions in the pathway nucleotide-sugar biosynthesis; UDP-N-acetyl-alpha-D-glucosamine biosynthesis; N-acetyl-alpha-D-glucosamine 1-phosphate from alpha-D-glucosamine 6-phosphate (route II): step 2/2. The protein operates within nucleotide-sugar biosynthesis; UDP-N-acetyl-alpha-D-glucosamine biosynthesis; UDP-N-acetyl-alpha-D-glucosamine from N-acetyl-alpha-D-glucosamine 1-phosphate: step 1/1. Its pathway is bacterial outer membrane biogenesis; LPS lipid A biosynthesis. Functionally, catalyzes the last two sequential reactions in the de novo biosynthetic pathway for UDP-N-acetylglucosamine (UDP-GlcNAc). The C-terminal domain catalyzes the transfer of acetyl group from acetyl coenzyme A to glucosamine-1-phosphate (GlcN-1-P) to produce N-acetylglucosamine-1-phosphate (GlcNAc-1-P), which is converted into UDP-GlcNAc by the transfer of uridine 5-monophosphate (from uridine 5-triphosphate), a reaction catalyzed by the N-terminal domain. This is Bifunctional protein GlmU from Synechococcus sp. (strain RCC307).